We begin with the raw amino-acid sequence, 176 residues long: Putative phosphohydrolase YueE (176 aa).

Residues 23 to 139 enclose the HD domain; that stretch reads GVAHAIACAY…VKKADELDEE (117 aa).

The polypeptide is Putative phosphohydrolase YueE (yueE) (Bacillus subtilis (strain 168)).